Consider the following 2319-residue polypeptide: Neurogenic locus notch homolog protein 3 (2319 aa).

Residues 1-14 are compositionally biased toward basic residues; that stretch reads MGPGARGRRRRRRL. The interval 1 to 20 is disordered; sequence MGPGARGRRRRRRLMALPPP. The N-terminal stretch at 1 to 40 is a signal peptide; the sequence is MGPGARGRRRRRRLMALPPPPPPMRALPLLLLLLAGLGAA. 3 EGF-like domains span residues 41-79, 80-120, and 121-158; these read APPCLDGSPCANGGRCTHQQPSREAACLCLPGWVGERCQ, LEDP…PDCS, and LPDPCFSSPCAHGAPCSVGSDGRYACACPPGYQGRNCR. At 41–1645 the chain is on the extracellular side; the sequence is APPCLDGSPC…LEPPEQSVPL (1605 aa). 99 disulfide bridges follow: cysteine 44/cysteine 56, cysteine 50/cysteine 67, cysteine 69/cysteine 78, cysteine 84/cysteine 95, cysteine 89/cysteine 108, cysteine 110/cysteine 119, cysteine 125/cysteine 136, cysteine 130/cysteine 146, cysteine 148/cysteine 157, cysteine 164/cysteine 176, cysteine 170/cysteine 185, cysteine 187/cysteine 196, cysteine 203/cysteine 214, cysteine 208/cysteine 224, cysteine 226/cysteine 235, cysteine 242/cysteine 253, cysteine 247/cysteine 262, cysteine 264/cysteine 273, cysteine 280/cysteine 293, cysteine 287/cysteine 302, cysteine 304/cysteine 313, cysteine 320/cysteine 331, cysteine 325/cysteine 340, cysteine 342/cysteine 351, cysteine 357/cysteine 368, cysteine 362/cysteine 379, cysteine 381/cysteine 390, cysteine 397/cysteine 410, cysteine 404/cysteine 419, cysteine 421/cysteine 430, cysteine 437/cysteine 448, cysteine 442/cysteine 457, cysteine 459/cysteine 468, cysteine 475/cysteine 486, cysteine 480/cysteine 495, cysteine 497/cysteine 506, cysteine 513/cysteine 524, cysteine 518/cysteine 533, cysteine 535/cysteine 544, cysteine 551/cysteine 561, cysteine 556/cysteine 570, cysteine 572/cysteine 581, cysteine 588/cysteine 599, cysteine 593/cysteine 608, cysteine 610/cysteine 619, cysteine 626/cysteine 636, cysteine 631/cysteine 645, cysteine 647/cysteine 656, cysteine 663/cysteine 674, cysteine 668/cysteine 683, cysteine 685/cysteine 694, cysteine 701/cysteine 711, cysteine 706/cysteine 720, cysteine 722/cysteine 731, cysteine 740/cysteine 751, cysteine 745/cysteine 760, cysteine 762/cysteine 771, cysteine 777/cysteine 788, cysteine 782/cysteine 798, cysteine 800/cysteine 809, cysteine 816/cysteine 828, cysteine 822/cysteine 837, cysteine 839/cysteine 848, cysteine 855/cysteine 866, cysteine 860/cysteine 875, cysteine 877/cysteine 886, cysteine 893/cysteine 903, cysteine 898/cysteine 912, cysteine 914/cysteine 923, cysteine 930/cysteine 941, cysteine 935/cysteine 950, cysteine 952/cysteine 961, cysteine 968/cysteine 979, cysteine 973/cysteine 988, cysteine 990/cysteine 999, cysteine 1006/cysteine 1017, cysteine 1011/cysteine 1024, cysteine 1026/cysteine 1035, cysteine 1042/cysteine 1063, cysteine 1057/cysteine 1072, cysteine 1074/cysteine 1083, cysteine 1090/cysteine 1101, cysteine 1095/cysteine 1110, cysteine 1112/cysteine 1121, cysteine 1128/cysteine 1139, cysteine 1133/cysteine 1148, cysteine 1150/cysteine 1159, cysteine 1166/cysteine 1184, cysteine 1178/cysteine 1193, cysteine 1195/cysteine 1204, cysteine 1211/cysteine 1224, cysteine 1216/cysteine 1234, cysteine 1236/cysteine 1245, cysteine 1252/cysteine 1263, cysteine 1257/cysteine 1277, cysteine 1279/cysteine 1288, cysteine 1295/cysteine 1306, cysteine 1300/cysteine 1315, and cysteine 1317/cysteine 1326. One can recognise an EGF-like 4; calcium-binding domain in the interval 160–197; that stretch reads DIDECRAGASCRHGGTCINTPGSFHCLCPLGYTGLLCE. One can recognise an EGF-like 5 domain in the interval 199–236; sequence PIVPCAPSPCRNGGTCRQSSDVTYDCACLPGFEGQNCE. An EGF-like 6; calcium-binding domain is found at 238–274; sequence NVDDCPGHRCLNGGTCVDGVNTYNCQCPPEWTGQFCT. One can recognise an EGF-like 7 domain in the interval 276-314; sequence DVDECQLQPNACHNGGTCFNLLGGHSCVCVNGWTGESCS. One can recognise an EGF-like 8; calcium-binding domain in the interval 316 to 352; sequence NIDDCATAVCFHGATCHDRVASFYCACPMGKTGLLCH. An EGF-like 9 domain is found at 353–391; sequence LDDACVSNPCHEDAICDTNPVSGRAICTCPPGFTGGACD. The EGF-like 10; calcium-binding domain maps to 393-431; sequence DVDECSIGANPCEHLGRCVNTQGSFLCQCGRGYTGPRCE. One can recognise an EGF-like 11; calcium-binding domain in the interval 433–469; sequence DVNECLSGPCRNQATCLDRIGQFTCICMAGFTGTFCE. Residues 471 to 507 form the EGF-like 12; calcium-binding domain; it reads DIDECQSSPCVNGGVCKDRVNGFSCTCPSGFSGSTCQ. An EGF-like 13; calcium-binding domain is found at 509 to 545; the sequence is DVDECASTPCRNGAKCVDQPDGYECRCAEGFEGTLCE. Positions 547–582 constitute an EGF-like 14; calcium-binding domain; the sequence is NVDDCSPDPCHHGRCVDGIASFSCACAPGYTGIRCE. An EGF-like 15; calcium-binding domain is found at 584 to 620; it reads QVDECRSQPCRYGGKCLDLVDKYLCRCPPGTTGVNCE. Residues 622 to 657 enclose the EGF-like 16; calcium-binding domain; sequence NIDDCASNPCTFGVCRDGINRYDCVCQPGFTGPLCN. The 37-residue stretch at 659–695 folds into the EGF-like 17; calcium-binding domain; the sequence is EINECASSPCGEGGSCVDGENGFHCLCPPGSLPPLCL. EGF-like domains follow at residues 697 to 732, 736 to 772, and 773 to 810; these read ANHPCAHKPCSHGVCHDAPGGFQCVCDPGWSGPRCS, APDACESQPCQAGGTCTSDGIGFHCTCAPGFQGHQCE, and VLSPCTPSLCEHGGHCESDPDQLTVCSCPPGWQGPRCQ. The EGF-like 21; calcium-binding domain occupies 812 to 849; that stretch reads DVDECAGASPCGPHGTCTNLPGSFRCICHGGYTGPFCD. Residues 851–887 enclose the EGF-like 22; calcium-binding domain; sequence DIDDCDPNPCLNGGSCQDGVGSFSCSCLSGFAGPRCA. Residues 889-924 form the EGF-like 23; calcium-binding domain; the sequence is DVDECLSSPCGPGTCTDHVASFTCTCPPGYGGFHCE. EGF-like domains are found at residues 926–962, 964–1000, 1002–1036, 1038–1084, and 1086–1122; these read DLLDCSPSSCFNGGTCVDGVNSFSCLCRPGYTGTHCQ, KVDPCFSRPCLHGGICNPTHSGFECTCREGFTGNQCQ, PVDWCSQAPCQNGGRCVQTGAYCICPPEWSGPLCD, PSLP…SHCE, and EVDPCTAQPCQHGGTCRGYMGGYVCECPTGYSGDSCE. The 37-residue stretch at 1124–1160 folds into the EGF-like 29; calcium-binding domain; the sequence is DVDECASQPCQNGGSCIDLVAHYLCSCPPGTLGVLCE. An EGF-like 30; calcium-binding domain is found at 1162-1205; the sequence is NEDDCGPGPSLDSGLRCLHNGTCVDLVGGFRCNCPPGYTGLHCE. Asparagine 1181 is a glycosylation site (N-linked (GlcNAc...) asparagine). EGF-like domains lie at 1207–1246, 1248–1289, 1291–1327, and 1337–1375; these read DINECRPGTCHAAHTRDCLQDPGGHFRCICLPGFTGPRCQ, ALFP…LRCE, VARSCRELQCPVGIPCQQTARGPRCACPPGLSGPSCR, and TNTSCAATPCLHGGSCLPVQSVPFFRCVCAPGWGGPRCE. N-linked (GlcNAc...) asparagine glycosylation is present at asparagine 1338. 12 cysteine pairs are disulfide-bonded: cysteine 1341/cysteine 1352, cysteine 1346/cysteine 1363, cysteine 1365/cysteine 1374, cysteine 1389/cysteine 1412, cysteine 1394/cysteine 1407, cysteine 1403/cysteine 1419, cysteine 1430/cysteine 1453, cysteine 1435/cysteine 1448, cysteine 1444/cysteine 1460, cysteine 1469/cysteine 1495, cysteine 1477/cysteine 1490, and cysteine 1486/cysteine 1502. 3 LNR repeats span residues 1389 to 1429, 1430 to 1467, and 1469 to 1507; these read CPRA…PWRQ, CEALQCWRLFNNSRCDPACSSPACLYDNFDCYSGGRDR, and CNPVYKKYCADHFADGRCDQGCNTEECGWDGLDCASEVP. Asparagine 1440 is a glycosylation site (N-linked (GlcNAc...) asparagine). A helical transmembrane segment spans residues 1646–1666; it reads LPLLVAGAVFLLVIFVLGVMV. The Cytoplasmic portion of the chain corresponds to 1667-2319; sequence ARRKREHSTL…EVTPKRQVMA (653 aa). ANK repeat units follow at residues 1840–1869, 1873–1903, 1907–1936, 1940–1969, and 1973–2002; these read TGETALHLAARYARADAAKRLLDAGADTNA, SGRTPLHTAVTADAQGVFQILIRNRSTDLDA, DGSTALILAARLAVEGMVEELIASHADVNA, LGKSALHWAAAVNNVEATLALLKNGANKDM, and KEETPLFLAAREGSYEAAKLLLDHFANREI. Disordered regions lie at residues 2026 to 2046 and 2059 to 2129; these read LDQPSGPRSPSGPHGLGPLLC and QSGT…EGPY. The segment covering 2029–2046 has biased composition (low complexity); sequence PSGPRSPSGPHGLGPLLC. Arginine 2175 carries the post-translational modification Omega-N-methylarginine. The disordered stretch occupies residues 2197 to 2319; it reads LNPATPVSPH…EVTPKRQVMA (123 aa). Residues 2263 to 2288 are compositionally biased toward low complexity; it reads SLSDWSDSTPSPATATSATAAGALPA. The segment covering 2297 to 2306 has biased composition (polar residues); the sequence is SLPQSQTQLG.

The protein belongs to the NOTCH family. Heterodimer of a C-terminal fragment N(TM) and a N-terminal fragment N(EC) which are probably linked by disulfide bonds. Interacts with MAML1, MAML2 and MAML3 which act as transcriptional coactivators for NOTCH3. Interacts with PSMA1. Interacts with HIF1AN. Post-translationally, synthesized in the endoplasmic reticulum as an inactive form which is proteolytically cleaved by a furin-like convertase in the trans-Golgi network before it reaches the plasma membrane to yield an active, ligand-accessible form. Cleavage results in a C-terminal fragment N(TM) and a N-terminal fragment N(EC). Following ligand binding, it is cleaved by TNF-alpha converting enzyme (TACE) to yield a membrane-associated intermediate fragment called notch extracellular truncation (NEXT). This fragment is then cleaved by presenilin dependent gamma-secretase to release a notch-derived peptide containing the intracellular domain (NICD) from the membrane. Phosphorylated. In terms of processing, hydroxylated by HIF1AN. Expressed in postnatal central nervous system (CNS) germinal zones and, in early postnatal life, within numerous cells throughout the CNS. It is more highly localized to ventricular germinal zones.

The protein resides in the cell membrane. The protein localises to the nucleus. Functionally, functions as a receptor for membrane-bound ligands Jagged1, Jagged2 and Delta1 to regulate cell-fate determination. Upon ligand activation through the released notch intracellular domain (NICD) it forms a transcriptional activator complex with RBPJ/RBPSUH and activates genes of the enhancer of split locus. Affects the implementation of differentiation, proliferation and apoptotic programs. Acts instructively to control the cell fate determination of CNS multipotent progenitor cells, resulting in astroglial induction and neuron/oligodendrocyte suppression. In Rattus norvegicus (Rat), this protein is Neurogenic locus notch homolog protein 3 (Notch3).